A 245-amino-acid chain; its full sequence is Adenosine 5'-phosphosulfate reductase (245 aa).

Positions 124, 125, 205, and 208 each coordinate [4Fe-4S] cluster. Residue Cys-231 is the Nucleophile; cysteine thiosulfonate intermediate of the active site.

This sequence belongs to the PAPS reductase family. CysH subfamily. [4Fe-4S] cluster is required as a cofactor.

It is found in the cytoplasm. It catalyses the reaction [thioredoxin]-disulfide + sulfite + AMP + 2 H(+) = adenosine 5'-phosphosulfate + [thioredoxin]-dithiol. It functions in the pathway sulfur metabolism; hydrogen sulfide biosynthesis; sulfite from sulfate. Its function is as follows. Catalyzes the formation of sulfite from adenosine 5'-phosphosulfate (APS) using thioredoxin as an electron donor. The protein is Adenosine 5'-phosphosulfate reductase of Chelativorans sp. (strain BNC1).